The primary structure comprises 458 residues: ATP synthase subunit beta (458 aa).

ATP is bound at residue 148-155 (GGAGVGKT).

The protein belongs to the ATPase alpha/beta chains family. In terms of assembly, F-type ATPases have 2 components, CF(1) - the catalytic core - and CF(0) - the membrane proton channel. CF(1) has five subunits: alpha(3), beta(3), gamma(1), delta(1), epsilon(1). CF(0) has three main subunits: a(1), b(2) and c(9-12). The alpha and beta chains form an alternating ring which encloses part of the gamma chain. CF(1) is attached to CF(0) by a central stalk formed by the gamma and epsilon chains, while a peripheral stalk is formed by the delta and b chains.

It localises to the cell inner membrane. The enzyme catalyses ATP + H2O + 4 H(+)(in) = ADP + phosphate + 5 H(+)(out). Functionally, produces ATP from ADP in the presence of a proton gradient across the membrane. The catalytic sites are hosted primarily by the beta subunits. The chain is ATP synthase subunit beta from Shewanella halifaxensis (strain HAW-EB4).